We begin with the raw amino-acid sequence, 157 residues long: Capsid protein (157 aa).

At A2 the chain carries N-acetylalanine; by host.

It belongs to the virgaviridae capsid protein family.

The protein resides in the virion. Capsid protein self-assembles to form rod-shaped virions about 18 nm in diameter with a central canal enclosing the viral genomic RNA. In Capsicum (peppers), this protein is Capsid protein (CP).